We begin with the raw amino-acid sequence, 365 residues long: Tubulin-like protein CetZ (365 aa).

GTP contacts are provided by residues 10-14 (QCGGK), 103-105 (GTG), glutamate 136, asparagine 163, and asparagine 181.

The protein belongs to the CetZ family.

The protein localises to the cytoplasm. In terms of biological role, involved in cell shape control. The chain is Tubulin-like protein CetZ from Pyrococcus abyssi (strain GE5 / Orsay).